The primary structure comprises 401 residues: L-rhamnonate dehydratase (401 aa).

2 residues coordinate substrate: His-29 and Arg-55. Residues Asp-222, Glu-248, and Glu-276 each coordinate Mg(2+). The Proton acceptor role is filled by His-325. Glu-345 serves as a coordination point for substrate.

This sequence belongs to the mandelate racemase/muconate lactonizing enzyme family. RhamD subfamily. As to quaternary structure, homooctamer; tetramer of dimers. The cofactor is Mg(2+).

The catalysed reaction is L-rhamnonate = 2-dehydro-3-deoxy-L-rhamnonate + H2O. Its function is as follows. Catalyzes the dehydration of L-rhamnonate to 2-keto-3-deoxy-L-rhamnonate (KDR). In Klebsiella pneumoniae subsp. pneumoniae (strain ATCC 700721 / MGH 78578), this protein is L-rhamnonate dehydratase.